A 201-amino-acid polypeptide reads, in one-letter code: MELVLKDAQSALTVSETTFGRDFNEALVHQVVVAYAAGARQGTRAQKTRAEITGSGKKPWRQKGTGRARSGSIKSPIWRSGGVTFAARPQDHSQKVNKKMYRGALKSILSELVRQDRLIVVEKFSVEAPKTKLLAQKLKDMALEDVLIITGELDENLFLAARNLHKVDVRDANGIDPVSLIAFDKVVMTADAVKQVEEMLA.

The disordered stretch occupies residues 46 to 71 (QKTRAEITGSGKKPWRQKGTGRARSG).

This sequence belongs to the universal ribosomal protein uL4 family. As to quaternary structure, part of the 50S ribosomal subunit.

Functionally, one of the primary rRNA binding proteins, this protein initially binds near the 5'-end of the 23S rRNA. It is important during the early stages of 50S assembly. It makes multiple contacts with different domains of the 23S rRNA in the assembled 50S subunit and ribosome. Forms part of the polypeptide exit tunnel. This is Large ribosomal subunit protein uL4 from Klebsiella pneumoniae (strain 342).